The following is a 419-amino-acid chain: Putative nickel insertion protein (419 aa).

The tract at residues 69–90 (HDPSNHPSQNTHHHHHHHTRHL) is disordered. A compositionally biased stretch (basic residues) spans 79 to 88 (THHHHHHHTR).

This sequence belongs to the LarC family.

The sequence is that of Putative nickel insertion protein from Rippkaea orientalis (strain PCC 8801 / RF-1) (Cyanothece sp. (strain PCC 8801)).